The sequence spans 759 residues: Probable Na(+)/H(+) antiporter C3A11.09 (759 aa).

The next 11 membrane-spanning stretches (helical) occupy residues 12–32, 36–56, 105–125, 133–153, 172–192, 206–226, 244–264, 295–315, 319–339, 361–381, and 415–435; these read HLAY…SLII, LFLG…PYVA, MLLP…YALI, SLAI…SIVG, ESGC…YLII, IIIL…GVIA, FLVF…IIGV, VIDL…MPWP, MPHM…ILIA, ALFA…CLVA, and VVCF…AFFM. Thr-442 is modified (phosphothreonine). Ser-446 is subject to Phosphoserine. At Thr-448 the chain carries Phosphothreonine. Composition is skewed to basic and acidic residues over residues 514–529, 537–547, 590–601, 622–647, and 655–671; these read LREE…HYDA, YESRQPRRSNE, IDEKLAQGDPKA, NLHE…ENHR, and SESH…RREQ. Disordered stretches follow at residues 514–558, 578–606, and 622–759; these read LREE…NPGD, SHTS…SFGR, and NLHE…RAWE. The segment covering 696–713 has biased composition (polar residues); the sequence is NENNESSSDTRNGLLSDN. N-linked (GlcNAc...) asparagine glycosylation is found at Asn-699 and Asn-713. Over residues 724-733 the composition is skewed to low complexity; sequence RAPSAAVSSE. Phosphoserine is present on Ser-735.

Belongs to the fungal Na(+)/H(+) exchanger family.

The protein resides in the membrane. Functionally, sodium export from cell, takes up external protons in exchange for internal sodium ions. In Schizosaccharomyces pombe (strain 972 / ATCC 24843) (Fission yeast), this protein is Probable Na(+)/H(+) antiporter C3A11.09 (sod22).